Here is a 91-residue protein sequence, read N- to C-terminus: Cell division protein ZapA (91 aa).

Residues 58-91 (LTAVNIASEYLKLKEEYNRLREQLKKEKDGERDD) adopt a coiled-coil conformation.

Belongs to the ZapA family. Type 2 subfamily. In terms of assembly, homodimer. Interacts with FtsZ.

It is found in the cytoplasm. Activator of cell division through the inhibition of FtsZ GTPase activity, therefore promoting FtsZ assembly into bundles of protofilaments necessary for the formation of the division Z ring. It is recruited early at mid-cell but it is not essential for cell division. This is Cell division protein ZapA from Geobacillus kaustophilus (strain HTA426).